Reading from the N-terminus, the 81-residue chain is Translational regulator CsrA (81 aa).

It belongs to the CsrA/RsmA family. In terms of assembly, homodimer; the beta-strands of each monomer intercalate to form a hydrophobic core, while the alpha-helices form wings that extend away from the core.

It localises to the cytoplasm. Its function is as follows. A translational regulator that binds mRNA to regulate translation initiation and/or mRNA stability. Usually binds in the 5'-UTR at or near the Shine-Dalgarno sequence preventing ribosome-binding, thus repressing translation. Its main target seems to be the major flagellin gene, while its function is anatagonized by FliW. The chain is Translational regulator CsrA from Halothermothrix orenii (strain H 168 / OCM 544 / DSM 9562).